Here is a 511-residue protein sequence, read N- to C-terminus: Vesicular acetylcholine transporter (511 aa).

The Cytoplasmic portion of the chain corresponds to 1-36 (MVVGQAKAAMGKISSAIGERSKRISGAMNEPLRKRK). A helical membrane pass occupies residues 37 to 57 (ILLVIVCIAMLLDNMLYMVIV). Over 58–108 (PIVPNYLETIRTYKLVYITIPSNGTNGSLLNSTQRAVLERNPNANEDIQIG) the chain is Lumenal, vesicle. N-linked (GlcNAc...) asparagine glycosylation is found at Asn80, Asn83, and Asn88. Residues 109–129 (VLFASKAILQLLSNPFTGTFI) form a helical membrane-spanning segment. Over 130–135 (DRVGYD) the chain is Cytoplasmic. The chain crosses the membrane as a helical span at residues 136-156 (IPLLIGLTIMFFSTITFAFGE). At 157–165 (SYAILFAAR) the chain is on the lumenal, vesicle side. The chain crosses the membrane as a helical span at residues 166 to 186 (SLQGLGSAFADTSGIAMIADK). Topologically, residues 187–197 (YTEESERTQAL) are cytoplasmic. Residues 198 to 218 (GIALAFISFGSLVAPPFGGVL) form a helical membrane-spanning segment. Over 219–225 (YQFAGKW) the chain is Lumenal, vesicle. Residues 226–246 (VPFLVLSFVCLLDGILLLMVV) form a helical membrane-spanning segment. Topologically, residues 247 to 267 (TPFASRTRGNTLQGTPIHKLM) are cytoplasmic. Residues 268-288 (IDPYIAVVAGALTTCNIPLAF) form a helical membrane-spanning segment. Topologically, residues 289–306 (LEPTISNWMKKTMNASEW) are lumenal, vesicle. The N-linked (GlcNAc...) asparagine glycan is linked to Asn302. A helical transmembrane segment spans residues 307–327 (QMGITWLPAFFPHILGVYITV). Topologically, residues 328-337 (KLAAKYPNYQ) are cytoplasmic. A helical transmembrane segment spans residues 338–358 (WLYGAFGLVIIGVSSCTIPAC). Over 359–363 (RNFEE) the chain is Lumenal, vesicle. The chain crosses the membrane as a helical span at residues 364–384 (LIIPLCALCFGIALVDTALLP). Residues 385-400 (TLAFLVDIRYVSVYGS) lie on the Cytoplasmic side of the membrane. Residues 401–421 (VYAIADISYSVAYALGPIMAG) traverse the membrane as a helical segment. Residues 422–428 (QIVHDLG) are Lumenal, vesicle-facing. The helical transmembrane segment at 429–449 (FVQLNLGMGLVNILYAPALLF) threads the bilayer. Residues 450–511 (LRNVCQMKPS…VLSDQEGYSE (62 aa)) are Cytoplasmic-facing. Residues 486–511 (AKEPHGTSSGNHSVHAVLSDQEGYSE) form a disordered region.

Belongs to the major facilitator superfamily. Vesicular transporter family. In terms of tissue distribution, high expression in the electric lobe of the brain.

The protein resides in the membrane. Involved in acetylcholine transport into synaptic vesicles. In Torpedo torpedo (Common torpedo), this protein is Vesicular acetylcholine transporter.